The following is a 348-amino-acid chain: Beta-hexosaminidase (348 aa).

Residues Asp-64, Arg-72, Arg-138, and 168–169 (KH) contribute to the substrate site. His-181 serves as the catalytic Proton donor/acceptor. Asp-252 functions as the Nucleophile in the catalytic mechanism.

It belongs to the glycosyl hydrolase 3 family. NagZ subfamily.

It is found in the cytoplasm. It carries out the reaction Hydrolysis of terminal non-reducing N-acetyl-D-hexosamine residues in N-acetyl-beta-D-hexosaminides.. The protein operates within cell wall biogenesis; peptidoglycan recycling. Functionally, plays a role in peptidoglycan recycling by cleaving the terminal beta-1,4-linked N-acetylglucosamine (GlcNAc) from peptide-linked peptidoglycan fragments, giving rise to free GlcNAc, anhydro-N-acetylmuramic acid and anhydro-N-acetylmuramic acid-linked peptides. The polypeptide is Beta-hexosaminidase (Nitrosomonas eutropha (strain DSM 101675 / C91 / Nm57)).